Reading from the N-terminus, the 833-residue chain is Leucine--tRNA ligase (833 aa).

The 'HIGH' region signature appears at 41-52; the sequence is PYPSGAGLHVGH. The 'KMSKS' region motif lies at 610–614; the sequence is KMSKS. Lysine 613 serves as a coordination point for ATP.

This sequence belongs to the class-I aminoacyl-tRNA synthetase family.

The protein resides in the cytoplasm. The catalysed reaction is tRNA(Leu) + L-leucine + ATP = L-leucyl-tRNA(Leu) + AMP + diphosphate. The polypeptide is Leucine--tRNA ligase (Streptococcus pneumoniae (strain CGSP14)).